Reading from the N-terminus, the 505-residue chain is Sucrose porin (505 aa).

Residues Met-1–Ala-22 form the signal peptide. Residues Glu-44–Lys-87 form a disordered region. The segment covering Gln-62–Gln-72 has biased composition (low complexity).

Belongs to the porin LamB (TC 1.B.3) family. As to quaternary structure, homotrimer.

The protein localises to the cell outer membrane. Its function is as follows. Porin for sucrose uptake. The protein is Sucrose porin (scrY) of Salmonella typhimurium.